Reading from the N-terminus, the 857-residue chain is Cation/H(+) antiporter 25 (857 aa).

Transmembrane regions (helical) follow at residues 65–85, 93–110, 122–142, 161–181, 194–214, 227–247, 259–279, 313–333, 385–405, 413–435, and 447–467; these read FSTF…VYVL, RIVC…SMLG, PIAN…FFFL, YIAA…GAAL, SIGG…YTVL, FAMS…VLFE, YSVI…LLVV, FLTD…GLVV, IYMS…AALF, SLTL…LHWI, and VMVL…SFLY. The residue at position 855 (serine 855) is a Phosphoserine.

This sequence belongs to the monovalent cation:proton antiporter 2 (CPA2) transporter (TC 2.A.37) family. CHX (TC 2.A.37.4) subfamily. Specifically expressed in pollen.

Its subcellular location is the membrane. Its function is as follows. May operate as a cation/H(+) antiporter. This is Cation/H(+) antiporter 25 (CHX25) from Arabidopsis thaliana (Mouse-ear cress).